Here is a 660-residue protein sequence, read N- to C-terminus: GRIP and coiled-coil domain-containing protein 2 (660 aa).

A disordered region spans residues 1–28; that stretch reads MSAPESSISPVPPPGSSSGGGKKLDSLP. Coiled coils occupy residues 30–92, 115–464, and 517–596; these read EDLV…VENN, EWKE…KAIA, and DEYR…EYLK. The GRIP domain occupies 585–636; the sequence is ELSNEKNMEYLKNVFVQFLKPESVPAERDQLVIVLQRVLHLSPKEVEILKAA.

This is GRIP and coiled-coil domain-containing protein 2 from Caenorhabditis elegans.